Here is a 429-residue protein sequence, read N- to C-terminus: Ubiquinone hydroxylase UbiL (429 aa).

The disordered stretch occupies residues 1-22; the sequence is MSEPLLRGLAAGDPPSATGPVT.

Belongs to the UbiH/COQ6 family. The cofactor is FAD.

It carries out the reaction a 2-(all-trans-polyprenyl)phenol + NADPH + O2 + H(+) = a 3-(all-trans-polyprenyl)benzene-1,2-diol + NADP(+) + H2O. It functions in the pathway cofactor biosynthesis; ubiquinone biosynthesis. Its function is as follows. Catalyzes the hydroxylation of two positions of the aromatic ring during ubiquinone biosynthesis. The chain is Ubiquinone hydroxylase UbiL from Rhodospirillum rubrum (strain ATCC 11170 / ATH 1.1.1 / DSM 467 / LMG 4362 / NCIMB 8255 / S1).